Reading from the N-terminus, the 303-residue chain is Probable endonuclease 4 (303 aa).

9 residues coordinate Zn(2+): histidine 78, histidine 118, glutamate 154, aspartate 188, histidine 191, histidine 222, aspartate 235, histidine 237, and glutamate 267.

The protein belongs to the AP endonuclease 2 family. Zn(2+) serves as cofactor.

The enzyme catalyses Endonucleolytic cleavage to 5'-phosphooligonucleotide end-products.. In terms of biological role, endonuclease IV plays a role in DNA repair. It cleaves phosphodiester bonds at apurinic or apyrimidinic (AP) sites, generating a 3'-hydroxyl group and a 5'-terminal sugar phosphate. This is Probable endonuclease 4 from Mycoplasmoides gallisepticum (strain R(low / passage 15 / clone 2)) (Mycoplasma gallisepticum).